Here is a 339-residue protein sequence, read N- to C-terminus: Ketol-acid reductoisomerase (NADP(+)) (339 aa).

Positions 1–182 constitute a KARI N-terminal Rossmann domain; the sequence is MRVYYDCDVN…GGGRSGIMKT (182 aa). Residues 24–27, Ser51, Thr53, and 83–86 contribute to the NADP(+) site; these read YGAQ and DELQ. The active site involves His108. Gly134 is an NADP(+) binding site. The region spanning 183–328 is the KARI C-terminal knotted domain; it reads TFREECETDL…DKIRSMMALT (146 aa). Residues Asp191, Glu195, Glu227, and Glu231 each coordinate Mg(2+). Residue Ser252 coordinates substrate.

Belongs to the ketol-acid reductoisomerase family. It depends on Mg(2+) as a cofactor.

It catalyses the reaction (2R)-2,3-dihydroxy-3-methylbutanoate + NADP(+) = (2S)-2-acetolactate + NADPH + H(+). The enzyme catalyses (2R,3R)-2,3-dihydroxy-3-methylpentanoate + NADP(+) = (S)-2-ethyl-2-hydroxy-3-oxobutanoate + NADPH + H(+). Its pathway is amino-acid biosynthesis; L-isoleucine biosynthesis; L-isoleucine from 2-oxobutanoate: step 2/4. It functions in the pathway amino-acid biosynthesis; L-valine biosynthesis; L-valine from pyruvate: step 2/4. In terms of biological role, involved in the biosynthesis of branched-chain amino acids (BCAA). Catalyzes an alkyl-migration followed by a ketol-acid reduction of (S)-2-acetolactate (S2AL) to yield (R)-2,3-dihydroxy-isovalerate. In the isomerase reaction, S2AL is rearranged via a Mg-dependent methyl migration to produce 3-hydroxy-3-methyl-2-ketobutyrate (HMKB). In the reductase reaction, this 2-ketoacid undergoes a metal-dependent reduction by NADPH to yield (R)-2,3-dihydroxy-isovalerate. In Bartonella bacilliformis (strain ATCC 35685 / KC583 / Herrer 020/F12,63), this protein is Ketol-acid reductoisomerase (NADP(+)).